We begin with the raw amino-acid sequence, 400 residues long: Probable peptidoglycan glycosyltransferase FtsW (400 aa).

The Cytoplasmic segment spans residues 1–24 (MSTGSLPLGLPSRDSLDGLRNSVD). A helical transmembrane segment spans residues 25-45 (LPLLAAAALLLGLGLIMVASA). At 46 to 63 (SMDLGERYYGNTWHFFQR) the chain is on the periplasmic side. A helical membrane pass occupies residues 64-84 (QVLFAAIGLALATVMWAIPLE). Residues 85–88 (RWER) are Cytoplasmic-facing. The chain crosses the membrane as a helical span at residues 89–109 (AGPWLLILVMVLLIAVLLPGV). Residues 110 to 118 (GRTVNGATR) lie on the Periplasmic side of the membrane. Residues 119-139 (WIPIGMFNLQVAEPVKLLVVM) traverse the membrane as a helical segment. Topologically, residues 140–153 (YLAGYIVRHYSALR) are cytoplasmic. The helical transmembrane segment at 154–174 (LHLRGFVRPLVVLGFGTVLLL) threads the bilayer. Residues 175–177 (LQP) are Periplasmic-facing. A helical transmembrane segment spans residues 178 to 198 (DFGGAAIMLAIGMGMLFLAGA). Lys199 is a topological domain (cytoplasmic). A helical transmembrane segment spans residues 200-220 (LWQFAALGATIAVGMAFVAVA). The Periplasmic segment spans residues 221 to 278 (APYRVARLTAFLDPWQDPFATGFQLTQSLIAIGSGGWFGTGLGNSVQKLFYLPEAHND). A helical transmembrane segment spans residues 279-299 (FLFAVFAEEFGFIGVLALIAL). Over 300 to 324 (FAVVVWRCVKIGLWAERAGHAFGSH) the chain is Cytoplasmic. The helical transmembrane segment at 325–345 (LAFGVAIWLALQSALNLAVNM) threads the bilayer. At 346–354 (GLLPTKGMT) the chain is on the periplasmic side. Residues 355–375 (LPFLSYGGSSLIVTLMAIGLV) form a helical membrane-spanning segment. The Cytoplasmic segment spans residues 376–400 (MRVYREAQIPAPRQSTPPRRKRGQA).

It belongs to the SEDS family. FtsW subfamily.

The protein localises to the cell inner membrane. The enzyme catalyses [GlcNAc-(1-&gt;4)-Mur2Ac(oyl-L-Ala-gamma-D-Glu-L-Lys-D-Ala-D-Ala)](n)-di-trans,octa-cis-undecaprenyl diphosphate + beta-D-GlcNAc-(1-&gt;4)-Mur2Ac(oyl-L-Ala-gamma-D-Glu-L-Lys-D-Ala-D-Ala)-di-trans,octa-cis-undecaprenyl diphosphate = [GlcNAc-(1-&gt;4)-Mur2Ac(oyl-L-Ala-gamma-D-Glu-L-Lys-D-Ala-D-Ala)](n+1)-di-trans,octa-cis-undecaprenyl diphosphate + di-trans,octa-cis-undecaprenyl diphosphate + H(+). Its pathway is cell wall biogenesis; peptidoglycan biosynthesis. Its function is as follows. Peptidoglycan polymerase that is essential for cell division. The polypeptide is Probable peptidoglycan glycosyltransferase FtsW (Thioalkalivibrio sp. (strain K90mix)).